Reading from the N-terminus, the 205-residue chain is Large ribosomal subunit protein uL18 (205 aa).

The protein belongs to the universal ribosomal protein uL18 family. Part of the 50S ribosomal subunit. Contacts the 5S and 23S rRNAs.

This is one of the proteins that bind and probably mediate the attachment of the 5S RNA into the large ribosomal subunit, where it forms part of the central protuberance. The sequence is that of Large ribosomal subunit protein uL18 from Haloquadratum walsbyi (strain DSM 16790 / HBSQ001).